A 480-amino-acid polypeptide reads, in one-letter code: Glycogen synthase 1 (480 aa).

K15 serves as a coordination point for ADP-alpha-D-glucose.

The protein belongs to the glycosyltransferase 1 family. Bacterial/plant glycogen synthase subfamily.

The catalysed reaction is [(1-&gt;4)-alpha-D-glucosyl](n) + ADP-alpha-D-glucose = [(1-&gt;4)-alpha-D-glucosyl](n+1) + ADP + H(+). It functions in the pathway glycan biosynthesis; glycogen biosynthesis. In terms of biological role, synthesizes alpha-1,4-glucan chains using ADP-glucose. The chain is Glycogen synthase 1 (glgA1) from Rhizobium meliloti (strain 1021) (Ensifer meliloti).